A 71-amino-acid polypeptide reads, in one-letter code: Small ribosomal subunit protein bS21 (71 aa).

Residues 37–71 (HYEKPTAERKRKKAAAVKRHMKKLSRDNARRVKLY) are disordered. Basic residues predominate over residues 45 to 59 (RKRKKAAAVKRHMKK). Residues 60-71 (LSRDNARRVKLY) are compositionally biased toward basic and acidic residues.

The protein belongs to the bacterial ribosomal protein bS21 family.

The protein is Small ribosomal subunit protein bS21 of Pseudoalteromonas translucida (strain TAC 125).